Consider the following 89-residue polypeptide: Cell division topological specificity factor (89 aa).

This sequence belongs to the MinE family.

Its function is as follows. Prevents the cell division inhibition by proteins MinC and MinD at internal division sites while permitting inhibition at polar sites. This ensures cell division at the proper site by restricting the formation of a division septum at the midpoint of the long axis of the cell. The sequence is that of Cell division topological specificity factor from Pectobacterium carotovorum subsp. carotovorum (strain PC1).